A 180-amino-acid chain; its full sequence is Inorganic pyrophosphatase (180 aa).

Residues lysine 28, arginine 42, and tyrosine 54 each coordinate substrate. Residues aspartate 66, aspartate 71, and aspartate 102 each contribute to the Mg(2+) site. A substrate-binding site is contributed by tyrosine 139.

Belongs to the PPase family. As to quaternary structure, homohexamer. Requires Mg(2+) as cofactor.

The protein localises to the cytoplasm. The enzyme catalyses diphosphate + H2O = 2 phosphate + H(+). Its function is as follows. Hydrolyzes PPi generated in anabolic reactions. Functionally, catalyzes the hydrolysis of inorganic pyrophosphate (PPi) forming two phosphate ions. The protein is Inorganic pyrophosphatase of Pseudanabaena sp. (strain PCC 6903).